Consider the following 329-residue polypeptide: PDZ and LIM domain protein 1 (329 aa).

N-acetylthreonine is present on T2. Positions 3–85 (TQQIDLQGPG…NLTLTVARSE (83 aa)) constitute a PDZ domain. S90 and S130 each carry phosphoserine. Y144 bears the Phosphotyrosine mark. Residues 258–317 (PMCDKCGTGIVGVFVKLRDRHRHPECYVCTDCGTNLKQKGHFFVEDQIYCEKHARERVTP) form the LIM zinc-binding domain. Residues C260, C263, H280, C283, C286, C289, C307, and H310 each contribute to the Zn(2+) site. T316 bears the Phosphothreonine mark. Y321 carries the post-translational modification Phosphotyrosine.

In terms of assembly, interacts with ACTN1, ACTN2 and ACTN4. Interacts with PDLIM4. As to expression, strongly expressed in the heart and skeletal muscle, moderately expressed in the spleen, small intestine, colon, placenta, and lung. A lower level expression is seen in liver, thymus, kidney, prostate and pancreas and is not found in the brain, testis, ovary, and peripheral blood leukocytes.

Its subcellular location is the cytoplasm. The protein localises to the cytoskeleton. It is found in the myofibril. It localises to the sarcomere. The protein resides in the z line. In terms of biological role, cytoskeletal protein that may act as an adapter that brings other proteins (like kinases) to the cytoskeleton. Involved in assembly, disassembly and directioning of stress fibers in fibroblasts. Required for the localization of ACTN1 and PALLD to stress fibers. Required for cell migration and in maintaining cell polarity of fibroblasts. This Homo sapiens (Human) protein is PDZ and LIM domain protein 1 (PDLIM1).